The following is a 141-amino-acid chain: Putative antiporter subunit mnhB2 (141 aa).

The next 4 membrane-spanning stretches (helical) occupy residues 10–30 (TVTKIVVFILLTFGFYVFFAG), 35–55 (GGGFIGGLIFSSAFILMFLAF), 70–90 (KLMIVGAIISALTAIVPVFFG), and 116–136 (LFELGILLTVVGVIVTIMLAL).

It belongs to the CPA3 antiporters (TC 2.A.63) subunit B family. As to quaternary structure, may form a heterooligomeric complex that consists of seven subunits: mnhA2, mnhB2, mnhC2, mnhD2, mnhE2, mnhF2 and mnhG2.

The protein resides in the cell membrane. The polypeptide is Putative antiporter subunit mnhB2 (mnhB2) (Staphylococcus haemolyticus (strain JCSC1435)).